The following is an 833-amino-acid chain: Interleukin enhancer-binding factor 3 homolog (833 aa).

The region spanning Arg11–Ser379 is the DZF domain. 2 disordered regions span residues Val65–Ala86 and Asp339–Pro403. Position 70 is a phosphothreonine (Thr70). The segment covering Arg373 to Pro385 has biased composition (basic and acidic residues). 2 DRBM domains span residues Glu402–Leu471 and His527–Pro593. Disordered regions lie at residues Asn597–Gly651, Gln702–Ala762, and Ala775–Arg833. Residues Gly629–Gly639 show a composition bias toward basic residues. The span at Arg640 to Gly651 shows a compositional bias: gly residues. Polar residues predominate over residues Ala775–Gln818.

It localises to the nucleus. It is found in the nucleolus. The protein resides in the cytoplasm. Functionally, RNA-binding protein that plays an essential role in the biogenesis of circular RNAs (circRNAs) which are produced by back-splicing circularization of pre-mRNAs. Within the nucleus, promotes circRNAs processing by stabilizing the regulatory elements residing in the flanking introns of the circularized exons. Plays thereby a role in the back-splicing of a subset of circRNAs. As a consequence, participates in a wide range of transcriptional and post-transcriptional processes. Binds to poly-U elements and AU-rich elements (AREs) in the 3'-UTR of target mRNAs. Upon viral infection, ILF3 accumulates in the cytoplasm and participates in the innate antiviral response. Mechanistically, ILF3 becomes phosphorylated and activated by the double-stranded RNA-activated protein kinase/PKR which releases ILF3 from cellular mature circRNAs. In turn, unbound ILF3 molecules are able to interact with and thus inhibit viral mRNAs. In Danio rerio (Zebrafish), this protein is Interleukin enhancer-binding factor 3 homolog (ilf3).